The chain runs to 114 residues: Protein ORF3 (114 aa).

The interval 1–28 (MGSRPCALGLFCCCSSCFCLCCPRHRPV) is membrane association. Hydrophobic regions lie at residues 6 to 22 (CALG…CLCC) and 33 to 53 (AAVG…GLIL). The interval 6–22 (CALGLFCCCSSCFCLCC) is induction of host SIRPA expression. An interaction with host HPX region spans residues 28–68 (VSRLAAAVGGAAAVPAVVSGVTGLILSPSQSPIFIQPTPSP). An interaction with the capsid protein region spans residues 48-72 (VTGLILSPSQSPIFIQPTPSPPMSP). Ser-71 is subject to Phosphoserine; by host. Positions 72–114 (PLRPGLDLVFANPPDHSAPLGVTRPSAPPLPHVVDLPQLGPRR) are homodimerization, and interaction with host AMBP/bikunin. The disordered stretch occupies residues 91 to 114 (LGVTRPSAPPLPHVVDLPQLGPRR). An interaction with host SRC, HCK, FYN, PIK3R3 and GRB2 region spans residues 95–104 (RPSAPPLPHV). Residues 96–99 (PSAP) carry the PTAP/PSAP motif motif.

The protein belongs to the hepevirus ORF3 protein family. As to quaternary structure, forms homooligomers. Interacts with host SRC, HCK, FYN, PIK3R3 and GRB2 (via SH3 domain); binding does not activate the kinases. Interacts with host AMBP/bikunin and AMBP/alpha-1-microglobulin peptides. Interacts with host HPX/hemopexin. Interacts (when phosphorylated) with capsid protein ORF2. Interacts with host TSG101; this interaction plays a role in viral release from the host cell. Interacts with host SIRPA; this interaction down-regulates the phosphorylation of host IRF3. In terms of processing, palmitoylated in the N-terminus.

It localises to the host endoplasmic reticulum membrane. The protein resides in the host cytoplasm. It is found in the host cytoskeleton. The protein localises to the virion. Its subcellular location is the host cell membrane. Functionally, small multifunctional phosphoprotein involved in virion morphogenesis, egress and counteracting host innate immunity. Plays critical roles in the final steps of viral release by interacting with host TSG101, a member of the vacuolar protein-sorting pathway and using other cellular host proteins involved in vesicle formation pathway. Also acts as a viroporin and forms ion conductive pores allowing viral particle release. Impairs the generation of type I interferon by down-regulating host TLR3 and TLR7 as well as their downstream signaling pathways. Down-regulates the phosphorylation of host IRF3 via the interaction with host SIRP-alpha, thereby inhibiting IFN-I expression. Interacts with host microtubules. This is Protein ORF3 from Hepatitis E virus genotype 1 (isolate Human/China/HeBei/1987) (HEV).